The chain runs to 132 residues: Fatty acid-binding protein, intestinal (132 aa).

N-acetylalanine is present on Ala2. 2 residues coordinate hexadecanoate: Trp83 and Arg107. Residues Trp83 and Arg107 each coordinate tetradecanoate.

Belongs to the calycin superfamily. Fatty-acid binding protein (FABP) family. As to expression, expressed in the small intestine. Expression in the mucosal cells of the ileum extends from the midvillar region to the villus tips.

The protein resides in the cytoplasm. Functionally, FABPs are thought to play a role in the intracellular transport of long-chain fatty acids and their acyl-CoA esters. FABP2 is probably involved in triglyceride-rich lipoprotein synthesis. Binds saturated long-chain fatty acids with a high affinity, but binds with a lower affinity to unsaturated long-chain fatty acids. FABP2 may also help maintain energy homeostasis by functioning as a lipid sensor. In Rattus norvegicus (Rat), this protein is Fatty acid-binding protein, intestinal (Fabp2).